The sequence spans 165 residues: Nucleotide-binding protein Ccon26_01810 (165 aa).

It belongs to the YajQ family.

Its function is as follows. Nucleotide-binding protein. The protein is Nucleotide-binding protein Ccon26_01810 of Campylobacter concisus (strain 13826).